The chain runs to 673 residues: Protein VirD3 (673 aa).

Disordered stretches follow at residues Val-36–Gly-73, Ser-171–Val-216, Glu-229–Ser-409, Arg-478–Phe-497, Glu-520–Leu-552, and Asp-585–Arg-673. Composition is skewed to polar residues over residues Ser-171–Gln-183, Val-193–Val-216, Ser-234–Ser-246, and Gln-268–Pro-277. A compositionally biased stretch (low complexity) spans Asn-278–Ser-287. Basic and acidic residues predominate over residues Ala-288–Glu-303. Composition is skewed to basic and acidic residues over residues Glu-520 to Phe-534 and Ala-638 to Arg-673.

The chain is Protein VirD3 (virD3) from Agrobacterium fabrum (strain C58 / ATCC 33970) (Agrobacterium tumefaciens (strain C58)).